The primary structure comprises 151 residues: Large ribosomal subunit protein uL15 (151 aa).

It belongs to the universal ribosomal protein uL15 family. Part of the 50S ribosomal subunit.

Binds to the 23S rRNA. The polypeptide is Large ribosomal subunit protein uL15 (Hyperthermus butylicus (strain DSM 5456 / JCM 9403 / PLM1-5)).